Consider the following 312-residue polypeptide: Malate dehydrogenase (312 aa).

NAD(+) contacts are provided by residues Gly7 to Gly13 and Asp34. Substrate contacts are provided by Arg81 and Arg87. NAD(+)-binding positions include Asn94 and Ile117–Asn119. 2 residues coordinate substrate: Asn119 and Arg153. His177 serves as the catalytic Proton acceptor. Met227 is a binding site for NAD(+).

This sequence belongs to the LDH/MDH superfamily. MDH type 1 family. In terms of assembly, homodimer.

It catalyses the reaction (S)-malate + NAD(+) = oxaloacetate + NADH + H(+). Catalyzes the reversible oxidation of malate to oxaloacetate. This is Malate dehydrogenase from Yersinia pseudotuberculosis serotype O:1b (strain IP 31758).